The sequence spans 183 residues: Transposon gamma-delta resolvase (183 aa).

Residues 2-137 (RLFGYARVST…EGRQEAMAKG (136 aa)) enclose the Resolvase/invertase-type recombinase catalytic domain. The O-(5'-phospho-DNA)-serine intermediate role is filled by Ser-10. Positions 161–180 (ASHISKTMNIARSTVYKVIN) form a DNA-binding region, H-T-H motif.

This sequence belongs to the site-specific recombinase resolvase family.

Functionally, this protein catalyzes the site-specific recombination of the transposon and also regulates its frequency of transposition. In Escherichia coli (strain K12), this protein is Transposon gamma-delta resolvase (tnpR).